We begin with the raw amino-acid sequence, 112 residues long: Nitrogen regulatory protein P-II (112 aa).

Tyrosine 51 is subject to O-UMP-tyrosine.

The protein belongs to the P(II) protein family. In terms of assembly, homotrimer. Uridylylated/deuridylylated by GlnD.

Its function is as follows. P-II indirectly controls the transcription of the glutamine synthetase gene (GlnA). P-II prevents NR-II-catalyzed conversion of NR-I to NR-I-phosphate, the transcriptional activator of GlnA. When P-II is uridylylated to P-II-UMP, these events are reversed. When the ratio of Gln to 2-ketoglutarate decreases, P-II is uridylylated to P-II-UMP, which causes the deadenylation of glutamine synthetase by GlnE, so activating the enzyme. The chain is Nitrogen regulatory protein P-II (glnB) from Haemophilus influenzae (strain ATCC 51907 / DSM 11121 / KW20 / Rd).